Here is a 336-residue protein sequence, read N- to C-terminus: Probable aquaglyceroporin-2 (336 aa).

The tract at residues 1–46 is disordered; it reads MPISTINDSISESSVHKSSIPTKVEMSQNEKYSEAPSEAPTIPPPP. Residues 1 to 64 lie on the Cytoplasmic side of the membrane; the sequence is MPISTINDSI…RENCQDAFSE (64 aa). The segment covering 9–19 has biased composition (low complexity); sequence SISESSVHKSS. The helical transmembrane segment at 65-85 threads the bilayer; sequence FFGTFVLLLFGDGVVAQVVLS. The Extracellular segment spans residues 86 to 94; sequence RGTKGDYQS. A helical transmembrane segment spans residues 95–115; the sequence is ISWGWGLGVMLGVYVGGKSGG. The Cytoplasmic portion of the chain corresponds to 116-135; the sequence is HLNPAVTLANCLFRGHPWRK. The NPA 1 signature appears at 118 to 120; that stretch reads NPA. The helical transmembrane segment at 136-156 threads the bilayer; it reads FPIYAVAQVLGAMAAAAVVYG. Residues 157–195 are Extracellular-facing; sequence NYKSAIDAYEGGPGIRTVIGENATAGVFCTYPAEFMTRT. Asparagine 178 carries N-linked (GlcNAc...) asparagine glycosylation. The chain crosses the membrane as a helical span at residues 196–216; it reads GMFFSEFIASTILQFVIFAMA. Residues 217–223 lie on the Cytoplasmic side of the membrane; the sequence is DSANIGA. A helical membrane pass occupies residues 224-244; that stretch reads GPLMPLGLFFLIFGIGACFGW. Residues 245 to 280 lie on the Extracellular side of the membrane; it reads ETGYAINLARDFGPRLVSYMLGYGSEVWSAGGYYFW. Residues 251-253 carry the NPA 2 motif; the sequence is NLA. Residues 281–301 form a helical membrane-spanning segment; the sequence is IPMVAPFFGCAFGGFLYDVFI. Topologically, residues 302-336 are cytoplasmic; it reads YTGPSPINTPGMGFGRLVSPRRSTWSNTYNANSPV.

Belongs to the MIP/aquaporin (TC 1.A.8) family.

Its subcellular location is the membrane. The catalysed reaction is H2O(in) = H2O(out). The enzyme catalyses glycerol(in) = glycerol(out). Functionally, probable water/glycerol channel that may have redundant functions with FgAQP4. The polypeptide is Probable aquaglyceroporin-2 (Gibberella zeae (strain ATCC MYA-4620 / CBS 123657 / FGSC 9075 / NRRL 31084 / PH-1) (Wheat head blight fungus)).